A 412-amino-acid polypeptide reads, in one-letter code: Protein MT3510 (412 aa).

Lys227 bears the N6-(pyridoxal phosphate)lysine mark.

The protein belongs to the DegT/DnrJ/EryC1 family.

This is Protein MT3510 from Mycobacterium tuberculosis (strain CDC 1551 / Oshkosh).